Here is a 309-residue protein sequence, read N- to C-terminus: Olfactory receptor 7A17 (309 aa).

Topologically, residues 1–25 are extracellular; it reads MEPENDTGISEFVLLGLSEEPELQP. Asn-5 is a glycosylation site (N-linked (GlcNAc...) asparagine). The chain crosses the membrane as a helical span at residues 26-46; the sequence is FLFGLFLSMYLVTVLGNLLII. At 47-54 the chain is on the cytoplasmic side; it reads LATISDSH. A helical membrane pass occupies residues 55 to 75; it reads LHTPMYFFLSNLSFADICFIS. Topologically, residues 76 to 99 are extracellular; sequence TTIPKMLINIQTQSRVITYAGCIT. Cys-97 and Cys-189 form a disulfide bridge. The chain crosses the membrane as a helical span at residues 100-120; sequence QMCFFVLFGGLDSLLLAVMAY. Residues 121-139 lie on the Cytoplasmic side of the membrane; it reads DRFVAICHPLHYTVIMNPR. A helical membrane pass occupies residues 140–160; that stretch reads LCGLLVLASWMIAALNSLSQS. Over 161 to 197 the chain is Extracellular; sequence LMVLWLSFCTDLEIPHFFCELNQVIHLACSDTFLNDM. A helical membrane pass occupies residues 198-217; sequence GMYFAAGLLAGGPLVGILCS. The Cytoplasmic portion of the chain corresponds to 218–237; that stretch reads YSKIVSSIRAISSAQGKYKA. A helical transmembrane segment spans residues 238 to 258; the sequence is FSTCASHLSVVSLFCCTGLGV. Residues 259-271 are Extracellular-facing; it reads YLTSAATHNSHTS. A helical membrane pass occupies residues 272-292; sequence ATASVMYTVATPMLNPFIYSL. Residues 293-309 are Cytoplasmic-facing; sequence RNKDIKRALKMSFRGKQ.

It belongs to the G-protein coupled receptor 1 family.

The protein resides in the cell membrane. In terms of biological role, odorant receptor. The sequence is that of Olfactory receptor 7A17 (OR7A17) from Homo sapiens (Human).